Reading from the N-terminus, the 354-residue chain is Homoserine O-succinyltransferase (354 aa).

The active-site Acyl-thioester intermediate is Cys146. The substrate site is built by Lys167 and Ser196. The Proton acceptor role is filled by His239. Glu241 is a catalytic residue. Residue Arg253 participates in substrate binding.

Belongs to the MetA family.

It is found in the cytoplasm. It catalyses the reaction L-homoserine + succinyl-CoA = O-succinyl-L-homoserine + CoA. The protein operates within amino-acid biosynthesis; L-methionine biosynthesis via de novo pathway; O-succinyl-L-homoserine from L-homoserine: step 1/1. Transfers a succinyl group from succinyl-CoA to L-homoserine, forming succinyl-L-homoserine. This is Homoserine O-succinyltransferase from Methylobacter tundripaludum (strain ATCC BAA-1195 / DSM 17260 / SV96).